The primary structure comprises 248 residues: Adenylate kinase isoenzyme 6 homolog HBR1 (248 aa).

ATP is bound by residues Gly-19, Gly-21, Lys-22, Ser-23, and Ser-24. The NMPbind stretch occupies residues 49-72; sequence NISEIAKERDCIESYDAKLDTSIV. An LID region spans residues 124–134; it reads TRNYNDLKLQE. Residue Arg-125 coordinates ATP. Residues 188 to 248 form a disordered region; sequence DGVSNELNKQ…EMEHTEDIAQ (61 aa). A compositionally biased stretch (acidic residues) spans 202-238; it reads DSSDEGDDNSDSDEYELEEDEQEEEEEREEYDEETNE. The segment covering 239–248 has biased composition (basic and acidic residues); it reads EMEHTEDIAQ.

The protein belongs to the adenylate kinase family. AK6 subfamily. In terms of assembly, interacts with small ribosomal subunit protein uS11. Not a structural component of 43S pre-ribosomes, but transiently interacts with them by binding to uS11.

The protein resides in the cytoplasm. Its subcellular location is the nucleus. The enzyme catalyses AMP + ATP = 2 ADP. The catalysed reaction is ATP + H2O = ADP + phosphate + H(+). Functionally, broad-specificity nucleoside monophosphate (NMP) kinase that catalyzes the reversible transfer of the terminal phosphate group between nucleoside triphosphates and monophosphates. Also has ATPase activity. Involved in the late cytoplasmic maturation steps of the 40S ribosomal particles, specifically 18S rRNA maturation. While NMP activity is not required for ribosome maturation, ATPase activity is. Associates transiently with small ribosomal subunit protein uS11. ATP hydrolysis breaks the interaction with uS11. May temporarily remove uS11 from the ribosome to enable a conformational change of the ribosomal RNA that is needed for the final maturation step of the small ribosomal subunit. Its NMP activity may have a role in nuclear energy homeostasis. Induces transcription of mating-type proteins ALPHA1 and ALPHA2 and moderately represses transcription of mating-type protein A1 in response to hemoglobin and growth signals. Involved in the induction of a high affinity fibronectin receptor by sub-inhibitory dosages of caspofungin. In Candida albicans (strain SC5314 / ATCC MYA-2876) (Yeast), this protein is Adenylate kinase isoenzyme 6 homolog HBR1 (HBR1).